We begin with the raw amino-acid sequence, 601 residues long: Cdc42-interacting protein 4 (601 aa).

Residues 1-117 (MDWGTELWDQ…EMKQERKMHF (117 aa)) form a required for podosome formation and interaction with AKAP9 and microtubules region. The required for translocation to the plasma membrane in response to insulin stretch occupies residues 1–117 (MDWGTELWDQ…EMKQERKMHF (117 aa)). The region spanning 1 to 264 (MDWGTELWDQ…AANAVDPKND (264 aa)) is the F-BAR domain. Positions 67-259 (FSQQQSFVQI…EGMKVAANAV (193 aa)) form a coiled coil. Disordered regions lie at residues 280–358 (GDVE…GRDP), 390–420 (DFSHLPPEQQRKRLQQQLEERSRELQKEVDQ), and 479–543 (RGDS…SPIG). Residues 289–302 (QPMNRAPSDSSLGT) are compositionally biased toward polar residues. The interaction with CDC42 stretch occupies residues 293-537 (RAPSDSSLGT…TEFDEDFEEE (245 aa)). The interval 293–601 (RAPSDSSLGT…PTSYLRVTLN (309 aa)) is interaction with PDE6G. Residues Ser296, Ser298, and Ser299 each carry the phosphoserine modification. Residues 314-329 (GRSRTKRWPFGKKNKP) are compositionally biased toward basic residues. Phosphoserine is present on Ser335. A compositionally biased stretch (low complexity) spans 336-346 (PLGGPVPSALP). Ser351 is modified (phosphoserine). Positions 388-481 (TEDFSHLPPE…ESRVLSNRGD (94 aa)) form a coiled coil. The REM-1 domain occupies 393–470 (HLPPEQQRKR…VQKYEAWLAE (78 aa)). Residues 407–420 (LEERSRELQKEVDQ) are compositionally biased toward basic and acidic residues. The segment at 471 to 601 (AESRVLSNRG…PTSYLRVTLN (131 aa)) is required for interaction with FASLG and localization to lysosomes. Ser482 is modified (phosphoserine). Positions 487–541 (ARPPDPPASAPPDSSSNSASQDTKESSEEPPSEESQDTPIYTEFDEDFEEEPTSP) are interaction with DNM2 and WASL. Residues 497 to 506 (PPDSSSNSAS) are compositionally biased toward low complexity. Acidic residues predominate over residues 529 to 538 (EFDEDFEEEP). Residues 529 to 601 (EFDEDFEEEP…PTSYLRVTLN (73 aa)) are interaction with DNM1 and WASL. A required for podosome formation region spans residues 538–601 (PTSPIGHCVA…PTSYLRVTLN (64 aa)). Residues 540-601 (SPIGHCVAIY…PTSYLRVTLN (62 aa)) enclose the SH3 domain. An interaction with WAS region spans residues 544 to 601 (HCVAIYHFEGSSEGTISMAEGEDLSLMEEDKGDGWTRVRRKEGGEGYVPTSYLRVTLN). Positions 546-601 (VAIYHFEGSSEGTISMAEGEDLSLMEEDKGDGWTRVRRKEGGEGYVPTSYLRVTLN) are interaction with ARHGAP17, DAAM1, DIAPH1 and DIAPH2.

This sequence belongs to the FNBP1 family. In terms of assembly, interacts specifically with GTP-bound RHOQ. Interacts with DNM2 and PDE6G. Homodimerizes, the dimers can polymerize end-to-end to form filamentous structures. Interacts specifically with GTP-bound CDC42. Interacts with AKAP9, ARHGAP17, DAAM1, DIAPH1, DIAPH2, DNM1, FASLG/FASL, GAPVD1, LYN, microtubules, SRC, WAS/WASP and WASL/N-WASP. Interacts with the ligand binding domain of the thyroid receptor (TR) in the presence of thyroid hormone. May interact with CTNNB1 and HD/HTT. In terms of processing, tyrosine phosphorylated. Also phosphorylated by PKA. As to expression, expressed in brain, colon, heart, kidney, liver, lung, megakaryocyte, ovary, pancreas, peripheral blood lymphocytes, placenta, prostate, skeletal muscle, small intestine, spleen, testis, thymus and trachea.

The protein resides in the cytoplasm. It is found in the cytoskeleton. Its subcellular location is the cell cortex. It localises to the lysosome. The protein localises to the golgi apparatus. The protein resides in the cell membrane. It is found in the cell projection. Its subcellular location is the phagocytic cup. It localises to the perinuclear region. Functionally, required for translocation of GLUT4 to the plasma membrane in response to insulin signaling. Required to coordinate membrane tubulation with reorganization of the actin cytoskeleton during endocytosis. Binds to lipids such as phosphatidylinositol 4,5-bisphosphate and phosphatidylserine and promotes membrane invagination and the formation of tubules. Also promotes CDC42-induced actin polymerization by recruiting WASL/N-WASP which in turn activates the Arp2/3 complex. Actin polymerization may promote the fission of membrane tubules to form endocytic vesicles. Required for the formation of podosomes, actin-rich adhesion structures specific to monocyte-derived cells. May be required for the lysosomal retention of FASLG/FASL. The polypeptide is Cdc42-interacting protein 4 (TRIP10) (Homo sapiens (Human)).